A 190-amino-acid chain; its full sequence is Large ribosomal subunit protein uL22 (190 aa).

The tract at residues 111 to 190 (SVQSTKAKAK…TKKKTEGEEK (80 aa)) is disordered. Over residues 125–147 (IKSEDSKNSLKVTESKADSKVDA) the composition is skewed to basic and acidic residues. Residues 167–178 (AKVATTKSTATR) are compositionally biased toward low complexity.

Belongs to the universal ribosomal protein uL22 family. Part of the 50S ribosomal subunit.

In terms of biological role, this protein binds specifically to 23S rRNA; its binding is stimulated by other ribosomal proteins, e.g. L4, L17, and L20. It is important during the early stages of 50S assembly. It makes multiple contacts with different domains of the 23S rRNA in the assembled 50S subunit and ribosome. Functionally, the globular domain of the protein is located near the polypeptide exit tunnel on the outside of the subunit, while an extended beta-hairpin is found that lines the wall of the exit tunnel in the center of the 70S ribosome. The sequence is that of Large ribosomal subunit protein uL22 from Helicobacter hepaticus (strain ATCC 51449 / 3B1).